Here is a 35-residue protein sequence, read N- to C-terminus: U5-ctenitoxin-Co1a (35 aa).

Cystine bridges form between cysteine 4-cysteine 18, cysteine 11-cysteine 24, cysteine 17-cysteine 32, and cysteine 26-cysteine 30.

As to expression, expressed by the venom gland.

Its subcellular location is the secreted. Blocks voltage-gated sodium channels (Nav). The polypeptide is U5-ctenitoxin-Co1a (Ctenus ornatus (Brazilian spider)).